Consider the following 150-residue polypeptide: CCAAT/enhancer-binding protein gamma (150 aa).

Lys-3 is covalently cross-linked (Glycyl lysine isopeptide (Lys-Gly) (interchain with G-Cter in SUMO2)). The interval 27–94 (GLQQVPQLVP…QKAQDTLQRV (68 aa)) is disordered. The span at 28-37 (LQQVPQLVPA) shows a compositional bias: low complexity. Residues 56 to 72 (SPMDRNSDEYRQRRERN) show a composition bias toward basic and acidic residues. In terms of domain architecture, bZIP spans 62–125 (SDEYRQRRER…SVLKDLFLEH (64 aa)). Positions 66–93 (RQRRERNNMAVKKSRLKSKQKAQDTLQR) are basic motif. The tract at residues 97–118 (LKEENERLEAKIKLLTKELSVL) is leucine-zipper. A disordered region spans residues 129 to 150 (LADNVQPISTETTATNSDNPGQ). Positions 134–150 (QPISTETTATNSDNPGQ) are enriched in polar residues.

This sequence belongs to the bZIP family. C/EBP subfamily. In terms of assembly, binds DNA as a dimer and can form stable heterodimers with CEBPA. Can form stable heterodimers with CEBPB. Interacts with ZNF638; this interaction increases transcriptional activation. In terms of tissue distribution, ubiquitous.

Its subcellular location is the nucleus. Functionally, transcription factor that binds to the promoter and the enhancer regions of target genes. Binds to the promoter and the enhancer of the immunoglobulin heavy chain. Binds to GPE1, a cis-acting element in the G-CSF gene promoter. Binds to the enhancer element PRE-I (positive regulatory element-I) of the IL-4 gene. Binds to the promoter and the enhancer of the alpha-1-fetoprotein gene. In Mus musculus (Mouse), this protein is CCAAT/enhancer-binding protein gamma (Cebpg).